Here is a 594-residue protein sequence, read N- to C-terminus: E3 ubiquitin-protein ligase TRAF7 (594 aa).

Residues 1-33 (MPPINTPRRSDSAISVRSLHSESSMSLRSTFSL) are disordered. Phosphoserine is present on residues serine 12 and serine 15. Residues 15 to 29 (SVRSLHSESSMSLRS) show a composition bias toward low complexity. The RING-type zinc-finger motif lies at 55–89 (CQLCCSVFKDPVITTCGHTFCRRCALKSEKCPVDN). A TRAF-type zinc finger spans residues 146 to 216 (HESSCDYRPV…RFEGLKEFLQ (71 aa)). WD repeat units lie at residues 318 to 357 (GHQG…KCQK), 361 to 398 (GHDG…KVNT), 401 to 437 (AHDN…LKLK), 439 to 478 (ELTG…CIHV), 481 to 518 (TSGG…QVRT), 521 to 562 (GHVG…CTQT), and 565 to 593 (RHQG…KVWT).

The protein belongs to the WD repeat TRAF7 family. Homodimer. Interacts with MAP3K3 and promotes the kinase activity of this enzyme. In terms of processing, phosphorylated by MAP3K3. Ubiquitinates itself upon phosphorylation. As to expression, ubiquitously expressed. Expression is relatively high in heart, liver, kidney, testis, prostate, thyroid, and salivary gland.

The protein resides in the cytoplasmic vesicle. Its subcellular location is the cytoplasm. It localises to the nucleus. It catalyses the reaction S-ubiquitinyl-[E2 ubiquitin-conjugating enzyme]-L-cysteine + [acceptor protein]-L-lysine = [E2 ubiquitin-conjugating enzyme]-L-cysteine + N(6)-ubiquitinyl-[acceptor protein]-L-lysine.. Its pathway is protein modification; protein ubiquitination. Functionally, E3 ubiquitin and SUMO-protein ligase that plays a role in different biological processes such as innate immunity, inflammation or apoptosis. Potentiates MAP3K3-mediated activation of the NF-kappa-B, JUN/AP1 and DDIT3 transcriptional regulators. Negatively regulates MYB transcriptional activity by sequestering it to the cytosol via SUMOylation. Plays a role in the phosphorylation of MAPK1 and/or MAPK3, probably via its interaction with MAP3K3. Negatively regulates RLR-mediated innate immunity by promoting 'Lys-48'-linked ubiquitination of TBK1 through its RING domain to inhibit the cellular antiviral response. Promotes 'Lys-29'-linked polyubiquitination of NEMO/IKBKG and RELA leading to targeting these two proteins to lysosomal degradative pathways, reducing the transcriptional activity of NF-kappa-B. The protein is E3 ubiquitin-protein ligase TRAF7 of Mus musculus (Mouse).